The primary structure comprises 417 residues: Probable dihydrofolate synthetase (417 aa).

34–37 is a binding site for ATP; it reads GKGS. Positions 58, 123, and 151 each coordinate Mg(2+). ATP is bound by residues arginine 274 and aspartate 289.

This sequence belongs to the folylpolyglutamate synthase family.

It carries out the reaction 7,8-dihydropteroate + L-glutamate + ATP = 7,8-dihydrofolate + ADP + phosphate + H(+). It functions in the pathway cofactor biosynthesis; tetrahydrofolylpolyglutamate biosynthesis. In terms of biological role, glutamate-adding enzyme which catalyzes the binding of the first glutamyl side chain to dihydropteroate. Leads to the de nove synthesis of tetrahydrofolate. de novo. This is Probable dihydrofolate synthetase (fol3) from Schizosaccharomyces pombe (strain 972 / ATCC 24843) (Fission yeast).